The following is a 436-amino-acid chain: Transcriptional regulator dmxR14 (436 aa).

Residues 1-27 show a composition bias toward polar residues; sequence MEEAETNTQVDSVPSNSVRSGAELSSK. The disordered stretch occupies residues 1–32; that stretch reads MEEAETNTQVDSVPSNSVRSGAELSSKSKLRD. A DNA-binding region (zn(2)-C6 fungal-type) is located at residues 34-61; it reads CHACARSKVRCPKQKPSCSRCEARGTTC. Residues 67-136 form a disordered region; the sequence is RRPGRRRETS…ITTVHNGPEN (70 aa). Polar residues predominate over residues 90–136; sequence SHANNRNSPSFSSTRSTLPSPIASDSNSNFTQPQNSSITTVHNGPEN.

It localises to the nucleus. Its function is as follows. Transcriptional regulator; part of the gene cluster that mediates the biosynthesis of the dimeric xanthones cryptosporioptides. The protein is Transcriptional regulator dmxR14 of Cryptosporiopsis sp. (strain 8999).